We begin with the raw amino-acid sequence, 177 residues long: Large ribosomal subunit protein uL6 (177 aa).

Belongs to the universal ribosomal protein uL6 family. As to quaternary structure, part of the 50S ribosomal subunit.

Functionally, this protein binds to the 23S rRNA, and is important in its secondary structure. It is located near the subunit interface in the base of the L7/L12 stalk, and near the tRNA binding site of the peptidyltransferase center. This Bordetella avium (strain 197N) protein is Large ribosomal subunit protein uL6.